Here is a 316-residue protein sequence, read N- to C-terminus: Glutathione synthetase (316 aa).

Positions 123-309 (NEKISTLSFK…ISGILLDSIE (187 aa)) constitute an ATP-grasp domain. ATP is bound at residue 149 to 206 (FQEKFGDIILKPINKMGGDSVFYVKKNDPNVSVIIDQLTNYGNSFCLIQEYIKEILNG). Mg(2+) is bound by residues glutamate 280 and asparagine 282.

Belongs to the prokaryotic GSH synthase family. The cofactor is Mg(2+). Requires Mn(2+) as cofactor.

It catalyses the reaction gamma-L-glutamyl-L-cysteine + glycine + ATP = glutathione + ADP + phosphate + H(+). Its pathway is sulfur metabolism; glutathione biosynthesis; glutathione from L-cysteine and L-glutamate: step 2/2. This chain is Glutathione synthetase, found in Wigglesworthia glossinidia brevipalpis.